The sequence spans 347 residues: UDP-3-O-acylglucosamine N-acyltransferase (347 aa).

Catalysis depends on His-241, which acts as the Proton acceptor.

It belongs to the transferase hexapeptide repeat family. LpxD subfamily. In terms of assembly, homotrimer.

It catalyses the reaction a UDP-3-O-[(3R)-3-hydroxyacyl]-alpha-D-glucosamine + a (3R)-hydroxyacyl-[ACP] = a UDP-2-N,3-O-bis[(3R)-3-hydroxyacyl]-alpha-D-glucosamine + holo-[ACP] + H(+). It participates in bacterial outer membrane biogenesis; LPS lipid A biosynthesis. Catalyzes the N-acylation of UDP-3-O-acylglucosamine using 3-hydroxyacyl-ACP as the acyl donor. Is involved in the biosynthesis of lipid A, a phosphorylated glycolipid that anchors the lipopolysaccharide to the outer membrane of the cell. This chain is UDP-3-O-acylglucosamine N-acyltransferase, found in Nitrosococcus oceani (strain ATCC 19707 / BCRC 17464 / JCM 30415 / NCIMB 11848 / C-107).